The following is a 439-amino-acid chain: Tol-Pal system protein TolB (439 aa).

Residues 1 to 22 (MKKPLRWLAALTVLLLPLSALA) form the signal peptide.

The protein belongs to the TolB family. The Tol-Pal system is composed of five core proteins: the inner membrane proteins TolA, TolQ and TolR, the periplasmic protein TolB and the outer membrane protein Pal. They form a network linking the inner and outer membranes and the peptidoglycan layer.

Its subcellular location is the periplasm. In terms of biological role, part of the Tol-Pal system, which plays a role in outer membrane invagination during cell division and is important for maintaining outer membrane integrity. The polypeptide is Tol-Pal system protein TolB (Xanthomonas oryzae pv. oryzae (strain KACC10331 / KXO85)).